The following is a 218-amino-acid chain: Very-long-chain (3R)-3-hydroxyacyl-CoA dehydratase (218 aa).

Over 1–6 (MKTYLS) the chain is Cytoplasmic. A helical membrane pass occupies residues 7–29 (IYYLIQFCGHSWIFTNMTTRFLF). The Lumenal segment spans residues 30–38 (FGQDAFADT). A helical membrane pass occupies residues 39 to 61 (FYSIGLVMQGCQLLSILELAHIL). Topologically, residues 62–67 (LGVEQN) are cytoplasmic. Residues 68-87 (GFLPMFLQVAERFIILFVVI) traverse the membrane as a helical segment. The Lumenal portion of the chain corresponds to 88–96 (TSQEEVQSK). The helical transmembrane segment at 97 to 116 (YIVCALFFIWNLWDVIRYPY) threads the bilayer. The Cytoplasmic segment spans residues 117–136 (DMLAAVDTDYSALTWLRHTW). Residues 137–159 (WIVAYPLSVLAEAYTIYESLPYF) form a helical membrane-spanning segment. Catalysis depends on residues Tyr141 and Glu148. The Lumenal portion of the chain corresponds to 160 to 178 (ESLGTYSFKMALPVSLSFH). Residues 179-201 (FPYILTLYLVLQPVGMLYICSCL) traverse the membrane as a helical segment. The Cytoplasmic portion of the chain corresponds to 202-218 (WSERKQYFQRKLKLKKN).

It belongs to the very long-chain fatty acids dehydratase HACD family.

It localises to the endoplasmic reticulum membrane. It catalyses the reaction a very-long-chain (3R)-3-hydroxyacyl-CoA = a very-long-chain (2E)-enoyl-CoA + H2O. The enzyme catalyses (3R)-hydroxyhexadecanoyl-CoA = (2E)-hexadecenoyl-CoA + H2O. The protein operates within lipid metabolism; fatty acid biosynthesis. Catalyzes the third of the four reactions of the long-chain fatty acids elongation cycle. This endoplasmic reticulum-bound enzymatic process, allows the addition of two carbons to the chain of long- and very long-chain fatty acids/VLCFAs per cycle. This enzyme catalyzes the dehydration of the 3-hydroxyacyl-CoA intermediate into trans-2,3-enoyl-CoA, within each cycle of fatty acid elongation. Thereby, it participates in the production of VLCFAs of different chain lengths that are involved in multiple biological processes as precursors of membrane lipids and lipid mediators. The sequence is that of Very-long-chain (3R)-3-hydroxyacyl-CoA dehydratase from Xenopus laevis (African clawed frog).